The sequence spans 1097 residues: MGLKVIQQNVHKFLQLRFWGWWKLYNKVKPLLNVARQEEEMKAKEEELRKAMAQTQELVNKVKELEEKTATLSQEKNDLTIQLQAEQENLMDAEERLTWMMKTKMDLESQISDMRERLEEEEGMAASLSAAKRKLEGELSDLKRDLEGLETTLAKTEKEKQALDHKVRTLTGDLSLREDSITKLQKEKRALEELHQKTLDDLQAEEDKVNHLTKNNSKLSTQIHELEDNWEQEKKIRAEVEKARRKAESDLKMTIDNLNEMERSKLDLEEVVKKRDLEINSVNSKYEDEQSLNSTLQRKLKEHQDRIEELEEELEAERAMRAKIEQNRKREAELLKLRRELEEAALQSEATASTLRKKHVDSMAELTEHVESLQRVKSKLEKDKQVMKAEIDDLNASMETIQKSKMNAEAHVRKLEDSLSEANAKVAELERNQAEINAIRTRLQAENSELSREYEESQSRLNQILRIKTSLTSQVDDYKRQLDEESKSRSTAVVSLANTKHDLDLVKEQLEEEQGGKSELQRLVSKLNTEVTTWRTKYETDAIQRTEELEETKRKLAARLQEAEEAAETAQARAASLEKNKQRLQAEVEDLTIDLEKANAAAAALDKKQRLFDKMLAEWQQKCEELQVEVDSSQKECRMYMTESFKIKTAYEESLEHLESVKKENKTLQEEIKDLIDQLGEGGRSVHELQKLKKKLEMEKEELQVALEEAESSLEVEESKVIRIQLELAQVKADIDRRIHEKEEEFEATRKNHQRAIESLQASLEAEAKGRAEALRLKKKMETDLNEMEIQLDHANKNNSELVKTLKRLQQQIKDLQVQMDEDARQHEELRKQYNLQERRLSLLQTELEEVRSALEGSERSRKLLEQEVVEITEWHNEINIQNQSLLVVKRKLESDVQRISNEHEELISEFRLTEERAKKAMMDAARMAEELRQEQDHCMHLEKIKKNYEVTIKDLQAKMEEAEQLALKGGKRTIMKLEARIKELETELDGEQKQHVETVKTLCKNERRLKELVFQTEEDHKTNQRMQALVEKLQNKLKVYKRQIEEAEDQANQTLARYRKTVHELDDAEDRAGMAETALNKLRTRHRVAGKGITSV.

The stretch at 31-1087 (LLNVARQEEE…TALNKLRTRH (1057 aa)) forms a coiled coil.

It belongs to the TRAFAC class myosin-kinesin ATPase superfamily. Myosin family. Specifically expressed in muscles of the head including temporalis and tensor veli palatini.

In terms of biological role, has most probably lost the function in masticatory muscles contraction suspected for its homologs in dog (AC F1PT61) and apes. This is an uncharacterized protein from Homo sapiens (Human).